A 1518-amino-acid chain; its full sequence is Putative cellulose synthase 2 (1518 aa).

The catalytic stretch occupies residues 1 to 731; sequence MYGTWFTTGK…EEKLEKQSFV (731 aa). Helical transmembrane passes span 24-44, 71-91, and 105-125; these read PVWV…SVRI, ITVF…VWRL, and LAVL…LSYF. The interval 144–237 is catalytic subdomain A; sequence QWPSVDVFVP…FAVIFDCDHV (94 aa). The active site involves D186. Residues D233 and D235 each contribute to the substrate site. The segment at 314–374 is catalytic subdomain B; it reads EAVMGIGGFA…GQRVRWARGM (61 aa). D330 is an active-site residue. Transmembrane regions (helical) follow at residues 404 to 424, 427 to 447, 465 to 485, 514 to 534, and 543 to 563; these read FLFA…LFLG, IIAA…FHSV, IYET…LLQP, ILAG…VWQF, and FILN…SIAV. A PilZ domain is found at 569 to 668; it reads QTRNAPRVSV…ERQVVSMVFG (100 aa). The tract at residues 732–1518 is cyclic di-GMP binding domain; the sequence is LKPVPRSARH…IARDDLTGEL (787 aa). Positions 765-785 are disordered; sequence APSPDQSGVTAETPFGDSNTG. Residues 768–785 show a composition bias toward polar residues; that stretch reads PDQSGVTAETPFGDSNTG. A helical transmembrane segment spans residues 1481–1501; the sequence is ALYLAGLAGAGLAALGVWAWL.

In the N-terminal section; belongs to the glycosyltransferase 2 family. This sequence in the C-terminal section; belongs to the AcsB/BcsB family.

The protein resides in the cell inner membrane. The catalysed reaction is [(1-&gt;4)-beta-D-glucosyl](n) + UDP-alpha-D-glucose = [(1-&gt;4)-beta-D-glucosyl](n+1) + UDP + H(+). Its pathway is glycan metabolism; bacterial cellulose biosynthesis. This chain is Putative cellulose synthase 2 (bcsABII-A), found in Komagataeibacter xylinus (Gluconacetobacter xylinus).